Consider the following 204-residue polypeptide: Terpene cyclase trt1 (204 aa).

The next 5 helical transmembrane spans lie at Phe-44–Ala-64, His-67–Ala-87, Phe-103–Leu-122, Phe-132–Arg-154, and Trp-169–Phe-189.

The protein belongs to the paxB family.

The protein localises to the membrane. It functions in the pathway secondary metabolite biosynthesis; terpenoid biosynthesis. Terpene cyclase; part of the gene cluster that mediates the biosynthesis of terretonin, a fungal meroterpenoid that acts as a mycotoxin. The first step of the pathway is the synthesis of 3,5-dimethylorsellinic acid (DMOA) by the polyketide synthase trt4. DMOA is then prenylated into farnesyl-DMOA by the polyprenyl transferase trt2. Methylation by the methyltransferase trt5 then leads to farnesyl-DMOA methyl ester which is further subject to epoxidation by the FAD-dependent monooxygenase trt8 to yield epoxyfarnesyl-DMOA methyl ester. Cyclization of epoxyfarnesyl-DMOA methyl ester by the terpene cyclase trt1 leads to a tetracycle intermediate which is in turn converted to preterretonin. Dehydrogenase trt9 comes next to transform preterretonin to preterrenoid. The FAD-dependent monooxygenase trt3 is then required for the C-hydroxylation at C16 of preterrenoid to yield terrenoid. The cytochrome P450 trt6 catalyzes three successive oxidations to transform terrenoid into an unstable intermediate, which then undergoes the D-ring expansion and unusual rearrangement of the methoxy group to afford the core skeleton of terretonin. Trt14 catalyzes the D-ring expansion of terretonin involving intramolecular methoxy rearrangement as well as the hydrolysis of the expanded D-ring and the methyl ester moiety. Finally, the nonheme iron-dependent dioxygenase trt7 accomplishes the last two oxidation reactions steps to complete the biosynthesis of terretonin. Terretonin C is produced via spontaneous decarboxylation of the terretonin precursor. Another shunt product of the terretonin biosynthesis is dihydrofarnesyl-DMOA, derived from epoxyfarnesyl-DMOA through hydrolysis of the epoxide. In Aspergillus terreus (strain NIH 2624 / FGSC A1156), this protein is Terpene cyclase trt1.